A 233-amino-acid chain; its full sequence is MQIIRVANAEEGGKKAFELIKEGMNNGAKVLGLATGSTPETLYKEMTASDVDFTEMTSVNLDEYVGLGGEDEQSYRYFMNKHLFDKKPFKETFVPNGKAEDLDAASAEYEKIIDAHPVDIQILGIGQNGHIGFNEPGTPLDSLTHVVELTESTINANKRYFDKVEDVPTRAVSMGIGSIMKGKKMILMAYGEAKAEAIKGMIDGPVTTDMPASALQNHQDVVVIIDDAAASKL.

Asp62 (proton acceptor; for enolization step) is an active-site residue. The active-site For ring-opening step is Asn128. His130 functions as the Proton acceptor; for ring-opening step in the catalytic mechanism. Residue Glu135 is the For ring-opening step of the active site.

Belongs to the glucosamine/galactosamine-6-phosphate isomerase family. NagB subfamily.

It carries out the reaction alpha-D-glucosamine 6-phosphate + H2O = beta-D-fructose 6-phosphate + NH4(+). It participates in amino-sugar metabolism; N-acetylneuraminate degradation; D-fructose 6-phosphate from N-acetylneuraminate: step 5/5. In terms of biological role, catalyzes the reversible isomerization-deamination of glucosamine 6-phosphate (GlcN6P) to form fructose 6-phosphate (Fru6P) and ammonium ion. The chain is Glucosamine-6-phosphate deaminase from Enterococcus faecalis (strain ATCC 700802 / V583).